A 246-amino-acid polypeptide reads, in one-letter code: Carboxy-S-adenosyl-L-methionine synthase (246 aa).

Residues Tyr39, 64–66, 89–90, 117–118, Asn132, and Arg199 contribute to the S-adenosyl-L-methionine site; these read GCS, DN, and DI.

The protein belongs to the class I-like SAM-binding methyltransferase superfamily. Cx-SAM synthase family. Homodimer.

It carries out the reaction prephenate + S-adenosyl-L-methionine = carboxy-S-adenosyl-L-methionine + 3-phenylpyruvate + H2O. Functionally, catalyzes the conversion of S-adenosyl-L-methionine (SAM) to carboxy-S-adenosyl-L-methionine (Cx-SAM). This is Carboxy-S-adenosyl-L-methionine synthase from Erwinia tasmaniensis (strain DSM 17950 / CFBP 7177 / CIP 109463 / NCPPB 4357 / Et1/99).